A 727-amino-acid chain; its full sequence is DNA topoisomerase 3 (727 aa).

The Toprim domain occupies 3–136 (KTVVLAEKPS…LKRLWISSVT (134 aa)). Glu9 and Asp105 together coordinate Mg(2+). The region spanning 153-592 (FENLYHSAVA…EMKEYAKQTI (440 aa)) is the Topo IA-type catalytic domain. Residues 187–192 (SCGRVQ) form an interaction with DNA region. The active-site O-(5'-phospho-DNA)-tyrosine intermediate is the Tyr310. Residues 685 to 711 (RRAKDKNSKASKRDVHSYMKKQNKDEP) show a composition bias toward basic and acidic residues. Positions 685 to 713 (RRAKDKNSKASKRDVHSYMKKQNKDEPIN) are disordered.

This sequence belongs to the type IA topoisomerase family. Mg(2+) serves as cofactor.

The catalysed reaction is ATP-independent breakage of single-stranded DNA, followed by passage and rejoining.. Its function is as follows. Releases the supercoiling and torsional tension of DNA, which is introduced during the DNA replication and transcription, by transiently cleaving and rejoining one strand of the DNA duplex. Introduces a single-strand break via transesterification at a target site in duplex DNA. The scissile phosphodiester is attacked by the catalytic tyrosine of the enzyme, resulting in the formation of a DNA-(5'-phosphotyrosyl)-enzyme intermediate and the expulsion of a 3'-OH DNA strand. The free DNA strand then undergoes passage around the unbroken strand, thus removing DNA supercoils. Finally, in the religation step, the DNA 3'-OH attacks the covalent intermediate to expel the active-site tyrosine and restore the DNA phosphodiester backbone. The polypeptide is DNA topoisomerase 3 (Bacillus licheniformis (strain ATCC 14580 / DSM 13 / JCM 2505 / CCUG 7422 / NBRC 12200 / NCIMB 9375 / NCTC 10341 / NRRL NRS-1264 / Gibson 46)).